A 95-amino-acid chain; its full sequence is Integration host factor subunit beta (95 aa).

It belongs to the bacterial histone-like protein family. In terms of assembly, heterodimer of an alpha and a beta chain.

Its function is as follows. This protein is one of the two subunits of integration host factor, a specific DNA-binding protein that functions in genetic recombination as well as in transcriptional and translational control. This Jannaschia sp. (strain CCS1) protein is Integration host factor subunit beta.